The primary structure comprises 554 residues: Protein NODULATION SIGNALING PATHWAY 1 (554 aa).

The interval T76 to G165 is disordered. Residues L82–P91 are compositionally biased toward polar residues. The span at L95–L107 shows a compositional bias: basic and acidic residues. Positions A150–N162 are enriched in low complexity. Positions N159 to K548 constitute a GRAS domain. Residues R166 to T227 are leucine repeat I (LRI). The segment at L246–T315 is VHIID. The VHIID signature appears at L281–D285. The interval T331–K373 is leucine repeat II (LRII). Positions L383–E468 are PFYRE. The interval A471–K548 is SAW.

This sequence belongs to the GRAS family. Expressed in epidermal and cortical root cells.

The protein localises to the nucleus. Its function is as follows. Transcriptional regulator essential for Nod-factor-induced gene expression. Acts downstream of calcium spiking. May be a target of DMI3, a calcium/calmodulin-dependent protein kinase (CCaMK). Is essential for Nod factor-elicited expression of ERN1. Transcription factor involved in the control of strigolactone biosynthesis in roots through the activation of the beta-carotene isomerase D27, which participates in a pathway leading to biosynthesis of strigolactones. This is Protein NODULATION SIGNALING PATHWAY 1 from Medicago truncatula (Barrel medic).